Consider the following 305-residue polypeptide: tRNA dimethylallyltransferase (305 aa).

11-18 (GPTAVGKT) is an ATP binding site. Position 13–18 (13–18 (TAVGKT)) interacts with substrate. Residues 36-39 (DSMQ) form an interaction with substrate tRNA region.

It belongs to the IPP transferase family. As to quaternary structure, monomer. Mg(2+) serves as cofactor.

The enzyme catalyses adenosine(37) in tRNA + dimethylallyl diphosphate = N(6)-dimethylallyladenosine(37) in tRNA + diphosphate. Catalyzes the transfer of a dimethylallyl group onto the adenine at position 37 in tRNAs that read codons beginning with uridine, leading to the formation of N6-(dimethylallyl)adenosine (i(6)A). The sequence is that of tRNA dimethylallyltransferase from Listeria monocytogenes serotype 4b (strain CLIP80459).